Consider the following 464-residue polypeptide: Asparagine--tRNA ligase (464 aa).

Belongs to the class-II aminoacyl-tRNA synthetase family. As to quaternary structure, homodimer.

It localises to the cytoplasm. The catalysed reaction is tRNA(Asn) + L-asparagine + ATP = L-asparaginyl-tRNA(Asn) + AMP + diphosphate + H(+). This Xanthomonas campestris pv. campestris (strain 8004) protein is Asparagine--tRNA ligase.